Reading from the N-terminus, the 722-residue chain is ORC ubiquitin ligase 1 (722 aa).

The segment at 18-56 (CHICLGKVRQPVVCTNNHVFCSICIDLWLKNNSQCPACR) adopts an RING-type; degenerate zinc-finger fold. 2 coiled-coil regions span residues 87–129 (LRKT…TILD) and 157–267 (VVEW…KEDV). S210 carries the post-translational modification Phosphoserine. The tract at residues 273-359 (RAPSADSKGP…RLGARETPMD (87 aa)) is disordered. The segment covering 302 to 319 (AGSASASHLASPSSSRLA) has biased composition (low complexity). The segment covering 323–338 (SVRQESTSRTEPNCPQ) has biased composition (polar residues). Residues 339–359 (NKDRYPKPTEPRLGARETPMD) show a composition bias toward basic and acidic residues. Residues S522, S549, S557, S564, and S566 each carry the phosphoserine modification. Polar residues predominate over residues 541–555 (MSESDNSKSPCNNGF). Disordered regions lie at residues 541-585 (MSES…GSKL) and 691-722 (VPEK…ATKS). Positions 571–581 (EFLEEPDKLQE) are enriched in basic and acidic residues. Over residues 698–722 (NGNQSTKRKIQSSLANASPSKATKS) the composition is skewed to polar residues. Phosphoserine is present on residues S715 and S717.

In terms of assembly, associates with ORC complex. Binds to chromatin; association is cell cycle-regulated, absent from mitotic chromosomes, is associated with chromatin from G1 and partially released from chromatin from mid S-phase. Auto-ubiquitinated.

It is found in the chromosome. It carries out the reaction S-ubiquitinyl-[E2 ubiquitin-conjugating enzyme]-L-cysteine + [acceptor protein]-L-lysine = [E2 ubiquitin-conjugating enzyme]-L-cysteine + N(6)-ubiquitinyl-[acceptor protein]-L-lysine.. In terms of biological role, E3 ubiquitin ligase essential for DNA replication origin activation during S phase. Acts as a replication origin selector which selects the origins to be fired and catalyzes the multi-mono-ubiquitination of a subset of chromatin-bound ORC3 and ORC5 during S-phase. This is ORC ubiquitin ligase 1 from Mus musculus (Mouse).